Here is a 166-residue protein sequence, read N- to C-terminus: Large ribosomal subunit protein uL10 (166 aa).

This sequence belongs to the universal ribosomal protein uL10 family. As to quaternary structure, part of the ribosomal stalk of the 50S ribosomal subunit. The N-terminus interacts with L11 and the large rRNA to form the base of the stalk. The C-terminus forms an elongated spine to which L12 dimers bind in a sequential fashion forming a multimeric L10(L12)X complex.

In terms of biological role, forms part of the ribosomal stalk, playing a central role in the interaction of the ribosome with GTP-bound translation factors. The sequence is that of Large ribosomal subunit protein uL10 from Aeromonas hydrophila subsp. hydrophila (strain ATCC 7966 / DSM 30187 / BCRC 13018 / CCUG 14551 / JCM 1027 / KCTC 2358 / NCIMB 9240 / NCTC 8049).